A 339-amino-acid chain; its full sequence is MQQVFFQETEFLNSVIDYDHKVETENLCLDIAYGTDKNFLFGCGISIASILKYNEGSRLCFHIFTDYFGDDDRKYFDALALQYKTRIKIYLINGDRLRSLPSTKNWTHAIYFRFVIADYFINKAPKVLYLDADIICQGTIEPLINFSFPDDKVAMVVTEGQADWWEKRAHSLGVAGIAKGYFNSGFLLINTAQWAAQQVSARAIAMLNEPEIIKKITHPDQDVLNMLLADKLIFADIKYNTQFSLNYQLKESFINPVTNDTIFIHYIGPTKPWHDWAWDYPVSQAFMEAKNASPWKNTALLKPNNSNQLRYSAKHMLKKHRYLKGFSNYLFYFIEKIKH.

UDP is bound by residues 34-39 and 131-132; these read GTDKNF and DA. The Mg(2+) site is built by Asp131 and Asp133. Short sequence motifs (DXD) lie at residues 131 to 133 and 220 to 222; these read DAD and DQD. His265 is a Mg(2+) binding site. 265 to 271 contacts UDP; that stretch reads HYIGPTK.

The protein belongs to the glycosyltransferase 8 family. Mg(2+) is required as a cofactor.

It carries out the reaction UDP-glucose + lipopolysaccharide = UDP + alpha-D-glucosyl-lipopolysaccharide.. It catalyses the reaction alpha-D-Gal-(1-&gt;6)-alpha-D-Glc-(1-&gt;3)-[L-alpha-D-Hep-(1-&gt;7)]-4-O-PO3(2-)-L-alpha-D-Hep-(1-&gt;3)-4-O-PO3(2-)-L-alpha-D-Hep-(1-&gt;5)-[alpha-Kdo-(2-&gt;4)]-alpha-Kdo-(2-&gt;6)-lipid A + UDP-alpha-D-glucose = alpha-D-Glc-(1-&gt;3)-[alpha-D-Gal-(1-&gt;6)]-alpha-D-Glc-(1-&gt;3)-[L-alpha-D-Hep-(1-&gt;7)]-4-O-PO3(2-)-L-alpha-D-Hep-(1-&gt;3)-4-O-PO3(2-)-L-alpha-D-Hep-(1-&gt;5)-[alpha-Kdo-(2-&gt;4)]-alpha-Kdo-(2-&gt;6)-lipid A + UDP + H(+). It participates in bacterial outer membrane biogenesis; LPS core biosynthesis. Its function is as follows. Glucosyltransferase involved in the biosynthesis of the core oligosaccharide region of lipopolysaccharide (LPS). Catalyzes the addition of a second glucose (glucose II) to the first outer-core glucose (glucose I). In vitro, can add multiple glucose residues to its lipid acceptor. Activity does not require the branched galactose added by WaaB, but it is higher in the presence of this branched galactose. In the absence of a lipid acceptor, can hydrolyze UDP-glucose, but not UDP-galactose. This is Lipopolysaccharide glucosyltransferase WaaO from Escherichia coli (strain K12).